Here is a 390-residue protein sequence, read N- to C-terminus: 5-hydroxytryptamine receptor 1B (390 aa).

Residues 1–46 are Extracellular-facing; the sequence is MEEPGAQCAPPLAAGSQIAVPQANLSAAHSHNCSAEGYIYQDSIAL. Asn-24 and Asn-32 each carry an N-linked (GlcNAc...) asparagine glycan. A helical membrane pass occupies residues 47–72; the sequence is PWKVLLVLLLALFTLATTLSNAFVVA. Residues 73-86 are Cytoplasmic-facing; that stretch reads TVYRTRKLHTPANY. A helical transmembrane segment spans residues 87-111; that stretch reads LIASLAVTDLLVSILVMPISTMYTV. Residues 112 to 119 are Extracellular-facing; the sequence is TGRWTLGQ. Residues 120–145 traverse the membrane as a helical segment; it reads VVCDLWLSSDITCCTASIMHLCVIAL. Cys-122 and Cys-199 are joined by a disulfide. Positions 129 and 134 each coordinate ergotamine. The DRY motif; important for ligand-induced conformation changes and signaling motif lies at 146–148; the sequence is DRY. Residues 146 to 165 are Cytoplasmic-facing; the sequence is DRYWAITDAVEYSAKRTPKR. The chain crosses the membrane as a helical span at residues 166-184; that stretch reads AAIMIRLVWVFSICISLPP. Over 185 to 205 the chain is Extracellular; sequence FFWRQAKAEEEVSECLVNTDH. Val-201 serves as a coordination point for ergotamine. The helical transmembrane segment at 206–229 threads the bilayer; that stretch reads VLYTVYSTVGAFYLPTLLLIALYG. Topologically, residues 230-315 are cytoplasmic; sequence RIYVEARSRI…AARERKATKT (86 aa). The segment covering 260 to 272 has biased composition (polar residues); it reads SPGSTTSVTSINS. Positions 260–282 are disordered; it reads SPGSTTSVTSINSRAPDVPSESG. Residues 316–337 form a helical membrane-spanning segment; it reads LGIILGVFIVCWLPFFIISLVM. The Extracellular segment spans residues 338-347; that stretch reads PICKDACWFH. A helical membrane pass occupies residues 348–370; sequence QAIFDFFTWLGYVNSLINPIIYT. Residues 365-369 carry the NPxxY motif; important for ligand-induced conformation changes and signaling motif; that stretch reads NPIIY. Topologically, residues 371–390 are cytoplasmic; sequence MSNEDFKQAFHKLIRFKCTS. Residue Cys-388 is the site of S-palmitoyl cysteine attachment.

It belongs to the G-protein coupled receptor 1 family. As to quaternary structure, homodimer. Heterodimer with HTR1D. Phosphorylated. Desensitization of the receptor may be mediated by its phosphorylation. In terms of processing, palmitoylated.

The protein resides in the cell membrane. Functionally, G-protein coupled receptor for 5-hydroxytryptamine (serotonin). Also functions as a receptor for ergot alkaloid derivatives, various anxiolytic and antidepressant drugs and other psychoactive substances, such as lysergic acid diethylamide (LSD). Ligand binding causes a conformation change that triggers signaling via guanine nucleotide-binding proteins (G proteins) and modulates the activity of downstream effectors, such as adenylate cyclase. HTR1B is coupled to G(i)/G(o) G alpha proteins and mediates inhibitory neurotransmission by inhibiting adenylate cyclase activity. Arrestin family members inhibit signaling via G proteins and mediate activation of alternative signaling pathways. Regulates the release of 5-hydroxytryptamine, dopamine and acetylcholine in the brain, and thereby affects neural activity, nociceptive processing, pain perception, mood and behavior. Besides, plays a role in vasoconstriction of cerebral arteries. This chain is 5-hydroxytryptamine receptor 1B (HTR1B), found in Oryctolagus cuniculus (Rabbit).